A 368-amino-acid chain; its full sequence is MMGRNDDAFHPLLHSTPESSVKIPVPLVSVGRESSQSKGNMKTAILIWLTLQNSIHTLLIRYSRAREVDAMFVSTVAVWLTEVIKCFICLFLVAQEETPRRFIHALRTQILEQPYDTLKVCIPAMIYIVQNNLFYVAASHLDAATFMITSQLKIFTAAIFTVIILRRSLNRTQWFALAVLFVGVSLVQLQGTKAKESSGESPFVGFVAVVVACCLSGFAGIYFEKILKGSAPVSLWMRNVQMAVFSIPASFSAIYMQDSKTVNEYGLLYGFDSIVWLTVLWYGVGGLSVAVCIKYADNIAKNFATSVAIILSTIGSIFLFDFIPSFTFLLGASLVIFSIFLYSSHQSMVAALGRLRGEIPSTKEAFCL.

8 consecutive transmembrane segments (helical) span residues 72 to 92 (FVSTVAVWLTEVIKCFICLFL), 118 to 138 (LKVCIPAMIYIVQNNLFYVAA), 145 to 165 (TFMITSQLKIFTAAIFTVIIL), 174 to 194 (WFALAVLFVGVSLVQLQGTKA), 203 to 223 (FVGFVAVVVACCLSGFAGIYF), 235 to 254 (LWMRNVQMAVFSIPASFSAI), 273 to 293 (SIVWLTVLWYGVGGLSVAVCI), and 317 to 337 (IFLFDFIPSFTFLLGASLVIF).

Belongs to the nucleotide-sugar transporter family. SLC35A subfamily. Expressed exclusively in pharyngeal cells g1 and g2, lateral seam cells, spermatheca and vas deferens.

The protein resides in the golgi apparatus membrane. Functionally, acts as a transporter of both UDP-galactose and UDP-N-acetylglucosamine into the Golgi lumen. Apparently transports UDP-galactose and UDP-N-acetylglucosamine simultaneously, and independently, by an unknown mechanism. Functions redundantly with nucleotide sugar transporter nstp-4. May be involved in gonadal development. This chain is UDP-galactose/UDP-N-acetylglucosamine transporter srf-3 (srf-3), found in Caenorhabditis elegans.